The primary structure comprises 379 residues: Histidinol-phosphate aminotransferase (379 aa).

Lys-236 is subject to N6-(pyridoxal phosphate)lysine.

Belongs to the class-II pyridoxal-phosphate-dependent aminotransferase family. Histidinol-phosphate aminotransferase subfamily. Homodimer. Pyridoxal 5'-phosphate serves as cofactor.

It carries out the reaction L-histidinol phosphate + 2-oxoglutarate = 3-(imidazol-4-yl)-2-oxopropyl phosphate + L-glutamate. It participates in amino-acid biosynthesis; L-histidine biosynthesis; L-histidine from 5-phospho-alpha-D-ribose 1-diphosphate: step 7/9. The sequence is that of Histidinol-phosphate aminotransferase from Desulfotalea psychrophila (strain LSv54 / DSM 12343).